Reading from the N-terminus, the 90-residue chain is Progonadoliberin-3 (90 aa).

The first 23 residues, 1 to 23 (MEASSRVTVQVLLLALVVQVTLS), serve as a signal peptide directing secretion. Gln24 carries the post-translational modification Pyrrolidone carboxylic acid. Gly33 is subject to Glycine amide.

Belongs to the GnRH family.

The protein resides in the secreted. Its function is as follows. Stimulates the secretion of gonadotropins. This Sparus aurata (Gilthead sea bream) protein is Progonadoliberin-3 (gnrh3).